The sequence spans 555 residues: Developmental regulatory protein wetA (555 aa).

Disordered regions lie at residues 113–171 (TGHS…LMRS), 250–310 (QSPA…SESL), 419–488 (TQAV…RGGK), and 508–531 (GVAP…RRRK). 5 stretches are compositionally biased toward polar residues: residues 162-171 (QSFSPGLMRS), 259-281 (PSAN…SALT), 293-310 (SPHS…SESL), 419-431 (TQAV…SPSI), and 464-488 (SGQS…RGGK).

Belongs to the wetA family.

Functionally, brlA, abaA and wetA are pivotal regulators of conidiophore development and conidium maturation. They act individually and together to regulate their own expression and that of numerous other sporulation-specific genes. Responsible for activating a set of genes whose products make up the final two conidial wall layers or direct their assembly and, through this activity, is responsible for acquisition of spore dormancy. In Emericella nidulans (strain FGSC A4 / ATCC 38163 / CBS 112.46 / NRRL 194 / M139) (Aspergillus nidulans), this protein is Developmental regulatory protein wetA.